The sequence spans 70 residues: Large ribosomal subunit protein uL29 (70 aa).

Belongs to the universal ribosomal protein uL29 family.

This is Large ribosomal subunit protein uL29 from Prochlorococcus marinus (strain MIT 9211).